A 249-amino-acid chain; its full sequence is MLIIPAIDLKDGHCVRLKQGIMENATVFSENPETVALHWLDNGARQLHLVDLNGAFAGKPKNGEAIRAIVEAVDGRIPIQLGGGIRDLETIEYYLDNGITYVIIGTAAVKVPGFLHDACYAFPGQIMVGLDAKSGKVAVDGWSKVTGHDVIDLAKKFQDYGVEAIIHTDIGRDGMLSGLNIEATVELAQALTIPVIASGGVTNLDDIRKLCEVQSEGITGVITGRAIYQGSLDFKEAQALADQLDAATI.

The Proton acceptor role is filled by aspartate 8. The active-site Proton donor is aspartate 131.

Belongs to the HisA/HisF family.

It is found in the cytoplasm. It carries out the reaction 1-(5-phospho-beta-D-ribosyl)-5-[(5-phospho-beta-D-ribosylamino)methylideneamino]imidazole-4-carboxamide = 5-[(5-phospho-1-deoxy-D-ribulos-1-ylimino)methylamino]-1-(5-phospho-beta-D-ribosyl)imidazole-4-carboxamide. It functions in the pathway amino-acid biosynthesis; L-histidine biosynthesis; L-histidine from 5-phospho-alpha-D-ribose 1-diphosphate: step 4/9. In Nitrosomonas europaea (strain ATCC 19718 / CIP 103999 / KCTC 2705 / NBRC 14298), this protein is 1-(5-phosphoribosyl)-5-[(5-phosphoribosylamino)methylideneamino] imidazole-4-carboxamide isomerase.